We begin with the raw amino-acid sequence, 66 residues long: MPKLKTKSSVKKRFSVTATGKIKSTQSAKRHGMTKRSKRSIRVQRGTTVMNQSDSRIIKLFMPYSR.

The segment covering A18–S27 has biased composition (polar residues). The interval A18–I41 is disordered. Residues A28 to I41 show a composition bias toward basic residues.

Belongs to the bacterial ribosomal protein bL35 family.

This Ehrlichia ruminantium (strain Gardel) protein is Large ribosomal subunit protein bL35.